The following is a 367-amino-acid chain: Alanine racemase (367 aa).

Lys34 serves as the catalytic Proton acceptor; specific for D-alanine. Lys34 is subject to N6-(pyridoxal phosphate)lysine. Arg129 lines the substrate pocket. The active-site Proton acceptor; specific for L-alanine is Tyr251. Residue Met299 coordinates substrate.

The protein belongs to the alanine racemase family. Requires pyridoxal 5'-phosphate as cofactor.

It catalyses the reaction L-alanine = D-alanine. The protein operates within amino-acid biosynthesis; D-alanine biosynthesis; D-alanine from L-alanine: step 1/1. Catalyzes the interconversion of L-alanine and D-alanine. May also act on other amino acids. The sequence is that of Alanine racemase (alr) from Thiobacillus denitrificans (strain ATCC 25259 / T1).